Consider the following 147-residue polypeptide: Nucleoside diphosphate kinase (147 aa).

ATP is bound by residues K11, F59, R87, T93, R104, and N114. H117 functions as the Pros-phosphohistidine intermediate in the catalytic mechanism.

It belongs to the NDK family. In terms of assembly, homotetramer. Requires Mg(2+) as cofactor.

The protein localises to the cytoplasm. It catalyses the reaction a 2'-deoxyribonucleoside 5'-diphosphate + ATP = a 2'-deoxyribonucleoside 5'-triphosphate + ADP. It carries out the reaction a ribonucleoside 5'-diphosphate + ATP = a ribonucleoside 5'-triphosphate + ADP. Its function is as follows. Major role in the synthesis of nucleoside triphosphates other than ATP. The ATP gamma phosphate is transferred to the NDP beta phosphate via a ping-pong mechanism, using a phosphorylated active-site intermediate. In Anaeromyxobacter sp. (strain K), this protein is Nucleoside diphosphate kinase.